Consider the following 140-residue polypeptide: MIDINSIKEALPHRYPMLLVDRVLEVSEDEIVALKNVTVNEPFFNGHFPQYPVMPGVLIMEALAQTAGVLELSKEENKGKLVFYAGMDKVKFKKQVVPGDQLIMTAKFVKRRGTIAVVEAKAEVDGKLAASGTLTFAIGQ.

The active site involves His-47.

It belongs to the thioester dehydratase family. FabZ subfamily.

The protein localises to the cytoplasm. The catalysed reaction is a (3R)-hydroxyacyl-[ACP] = a (2E)-enoyl-[ACP] + H2O. Involved in unsaturated fatty acids biosynthesis. Catalyzes the dehydration of short chain beta-hydroxyacyl-ACPs and long chain saturated and unsaturated beta-hydroxyacyl-ACPs. The polypeptide is 3-hydroxyacyl-[acyl-carrier-protein] dehydratase FabZ (Streptococcus sanguinis (strain SK36)).